Reading from the N-terminus, the 1263-residue chain is DNA-directed RNA polymerase subunit beta (1263 aa).

Belongs to the RNA polymerase beta chain family. The RNAP catalytic core consists of 2 alpha, 1 beta, 1 beta' and 1 omega subunit. When a sigma factor is associated with the core the holoenzyme is formed, which can initiate transcription.

The catalysed reaction is RNA(n) + a ribonucleoside 5'-triphosphate = RNA(n+1) + diphosphate. In terms of biological role, DNA-dependent RNA polymerase catalyzes the transcription of DNA into RNA using the four ribonucleoside triphosphates as substrates. This Thermotoga sp. (strain RQ2) protein is DNA-directed RNA polymerase subunit beta.